The sequence spans 329 residues: Glycerol-3-phosphate dehydrogenase [NAD(P)+] (329 aa).

NADPH-binding residues include W11, R30, and K103. The sn-glycerol 3-phosphate site is built by K103, G132, and S134. A136 contributes to the NADPH binding site. Positions 187, 240, 250, 251, and 252 each coordinate sn-glycerol 3-phosphate. K187 serves as the catalytic Proton acceptor. R251 contacts NADPH. NADPH is bound by residues V275 and E277.

This sequence belongs to the NAD-dependent glycerol-3-phosphate dehydrogenase family.

The protein resides in the cytoplasm. It carries out the reaction sn-glycerol 3-phosphate + NAD(+) = dihydroxyacetone phosphate + NADH + H(+). The catalysed reaction is sn-glycerol 3-phosphate + NADP(+) = dihydroxyacetone phosphate + NADPH + H(+). The protein operates within membrane lipid metabolism; glycerophospholipid metabolism. In terms of biological role, catalyzes the reduction of the glycolytic intermediate dihydroxyacetone phosphate (DHAP) to sn-glycerol 3-phosphate (G3P), the key precursor for phospholipid synthesis. The protein is Glycerol-3-phosphate dehydrogenase [NAD(P)+] of Methylobacillus flagellatus (strain ATCC 51484 / DSM 6875 / VKM B-1610 / KT).